We begin with the raw amino-acid sequence, 550 residues long: Chaperonin GroEL (550 aa).

ATP is bound by residues 30–33 (TLGP), K51, 87–91 (DGTTT), G415, 479–481 (NAA), and D495. Residues 526–550 (KDEKSDLGNSSAPSAGGMGGMGGMM) form a disordered region. Residues 541 to 550 (GGMGGMGGMM) show a composition bias toward gly residues.

This sequence belongs to the chaperonin (HSP60) family. As to quaternary structure, forms a cylinder of 14 subunits composed of two heptameric rings stacked back-to-back. Interacts with the co-chaperonin GroES.

The protein localises to the cytoplasm. The catalysed reaction is ATP + H2O + a folded polypeptide = ADP + phosphate + an unfolded polypeptide.. Functionally, together with its co-chaperonin GroES, plays an essential role in assisting protein folding. The GroEL-GroES system forms a nano-cage that allows encapsulation of the non-native substrate proteins and provides a physical environment optimized to promote and accelerate protein folding. This is Chaperonin GroEL from Buchnera aphidicola subsp. Baizongia pistaciae (strain Bp).